The primary structure comprises 676 residues: Pre-mRNA-splicing factor clf1 (676 aa).

HAT repeat units follow at residues 52 to 84 (EYQGRKRKEFEDYVRRNRLNMNNWMRYASWELE), 86 to 118 (KEFRRARSIFERALDVNPTSVVLWIRYIESEMR), 120 to 152 (RNINHARNLLDRAVTILPRVDKFWYKYVYMEET), 154 to 185 (GNIQGTRQVFERWMSWEPDEGAWSAYIKLEKR), 187 to 218 (NEFERARAIFQRFTIVHPEPRNWIKWARFEEE), 220 to 255 (GTSDLVREVYGMAIETLGEDFMDEKLFIAYAKFEAK), 257 to 291 (KEYERARAIYKYALDRLPRSKAMALHKAYTTFEKQ), 301 to 333 (VILSKRRVQYEEQLKENPRNYDVWFDFARLEET), 335 to 369 (GDPDRVRDIYERAIAQIPPSQEKRHWRRYIYLWIF), 379 to 415 (KDVDRARQIYTECLKLIPHKKFTFAKIWLLKAQFDIR), 417 to 448 (MDLQAARKTLGQAIGMCPKDKLFRGYIDLERQ), 450 to 482 (FEFVRCRTLYEKQIEWNPANSQSWIKYAELERG), 484 to 518 (DDSERARAIFELGIDQPMLDMPELVWKAYIDFEEY), and 520 to 551 (GEYDRVRQLYERLLQKTDHVKVWINYARFEIN). The segment covering 554-566 (EEEEEEEEEEEEE) has biased composition (acidic residues). A disordered region spans residues 554–573 (EEEEEEEEEEEEERPVSDEA). Residues 572–610 (EAKRRARAVFERAHKVFKEKEMKEERVELLNAWRAFEHT) form an HAT 15 repeat.

Belongs to the crooked-neck family. In terms of assembly, associated with the spliceosome.

It localises to the nucleus. Functionally, involved in pre-mRNA splicing and cell cycle progression. Required for the spliceosome assembly and initiation of the DNA replication. The sequence is that of Pre-mRNA-splicing factor clf1 (clf1) from Aspergillus fumigatus (strain ATCC MYA-4609 / CBS 101355 / FGSC A1100 / Af293) (Neosartorya fumigata).